The chain runs to 1925 residues: Plexin-D1 (1925 aa).

Over residues 1 to 21 the composition is skewed to low complexity; it reads MARRAAGGAPPSARAAAAVPL. The disordered stretch occupies residues 1 to 26; the sequence is MARRAAGGAPPSARAAAAVPLRPRPH. A signal peptide spans 1 to 48; the sequence is MARRAAGGAPPSARAAAAVPLRPRPHSRGPGLLPLPLLLLLGAARAGA. One can recognise a Sema domain in the interval 49–548; the sequence is LEIQRRFPSP…TSHQMARVKV (500 aa). Topologically, residues 49 to 1271 are extracellular; sequence LEIQRRFPSP…TLQLGGSETA (1223 aa). 2 disulfides stabilise this stretch: cysteine 106-cysteine 116 and cysteine 142-cysteine 150. 2 N-linked (GlcNAc...) asparagine glycosylation sites follow: asparagine 157 and asparagine 226. Cystine bridges form between cysteine 324/cysteine 447 and cysteine 347/cysteine 391. Asparagine 483 carries an N-linked (GlcNAc...) asparagine glycan. Intrachain disulfides connect cysteine 551–cysteine 568, cysteine 557–cysteine 602, cysteine 560–cysteine 577, cysteine 571–cysteine 583, and cysteine 639–cysteine 663. IPT/TIG domains are found at residues 893 to 977, 983 to 1065, and 1071 to 1145; these read PEIR…SREQ, PTVH…NLTF, and PVIT…FING. An N-linked (GlcNAc...) asparagine glycan is attached at asparagine 967. N-linked (GlcNAc...) asparagine glycosylation occurs at asparagine 1120. A helical transmembrane segment spans residues 1272-1292; the sequence is IVVSIVICSVLLLLSVVALFV. Residues 1293–1925 lie on the Cytoplasmic side of the membrane; sequence FCTKSRRAER…NNIYECYSEA (633 aa).

This sequence belongs to the plexin family. Interacts with NRP1 and SEMA4A. Interacts with SH3BP1; they dissociate upon SEMA3E binding to PLXND1 allowing SH3BP1 to transduce downstream signal through RAC1 inactivation. As to expression, detected in embryonic heart and vascular endothelium, brain, dorsal root ganglia, adrenal gland, lung mesenchyme, small intestine and in the ossification centers of vertebral bodies.

The protein localises to the cell membrane. It localises to the cell projection. It is found in the lamellipodium membrane. Cell surface receptor for SEMA4A and for class 3 semaphorins, such as SEMA3A, SEMA3C and SEMA3E. Plays an important role in cell-cell signaling, and in regulating the migration of a wide spectrum of cell types. Regulates the migration of thymocytes in the medulla. Regulates endothelial cell migration. Plays an important role in ensuring the specificity of synapse formation. Mediates anti-angiogenic signaling in response to SEMA3E. Required for normal development of the heart and vasculature. This is Plexin-D1 (Plxnd1) from Mus musculus (Mouse).